The primary structure comprises 504 residues: uncharacterized protein (504 aa).

A helical transmembrane segment spans residues 26–46 (ILFLLLGLIILVNISINVTTV). The span at 103-112 (PTQCSSSSTH) shows a compositional bias: polar residues. 3 disordered regions span residues 103-180 (PTQC…TRPM), 313-402 (YDAR…PLTT), and 431-504 (QRLA…GKLN). A compositionally biased stretch (basic residues) spans 113 to 128 (YFRKHSNDRRSRRRYC). Residues 135-147 (QIRQSNQQQSCHS) are compositionally biased toward polar residues. Over residues 313 to 324 (YDARDQWRRGTE) the composition is skewed to basic and acidic residues. The span at 349-377 (SSQAHRQNFPSYTHSQPNHSPPQSVGYSS) shows a compositional bias: polar residues. 2 stretches are compositionally biased toward basic and acidic residues: residues 378-389 (RESHEVRRRAPD) and 467-478 (LELKRQVQENRG). Basic residues predominate over residues 494 to 504 (SLHRSRTGKLN).

It localises to the membrane. This is an uncharacterized protein from Rattus norvegicus (Rat).